Here is a 420-residue protein sequence, read N- to C-terminus: Methanogen homoaconitase large subunit (420 aa).

Cys302, Cys362, and Cys365 together coordinate [4Fe-4S] cluster.

The protein belongs to the aconitase/IPM isomerase family. LeuC type 2 subfamily. Heterotetramer of 2 HacA and 2 HacB proteins. Requires [4Fe-4S] cluster as cofactor.

It carries out the reaction (2R)-homocitrate = (2R,3S)-homoisocitrate. It catalyses the reaction (2R)-homocitrate = cis-homoaconitate + H2O. The catalysed reaction is (2R,3S)-homoisocitrate = cis-homoaconitate + H2O. The enzyme catalyses cis-(homo)2aconitate + H2O = (2R,3S)-iso(homo)2citrate. It carries out the reaction cis-(homo)3aconitate + H2O = (2R,3S)-iso(homo)3citrate. It catalyses the reaction (R)-malate = maleate + H2O. The catalysed reaction is cis-aconitate + H2O = D-threo-isocitrate. It participates in organic acid metabolism; 2-oxosuberate biosynthesis. Its function is as follows. Component of a hydro-lyase with broad substrate specificity for cis-unsaturated tricarboxylic acids. Catalyzes both the reversible dehydration of (R)-homocitrate ((R)-2-hydroxybutane-1,2,4-tricarboxylate) to produce cis-homoaconitate ((Z)-but-1-ene-1,2,4-tricarboxylate), and its hydration to homoisocitrate ((1R,2S)-1-hydroxybutane-1,2,4-tricarboxylate). Is also able to hydrate the analogous longer chain substrates cis-homo(2)-aconitate, cis-homo(3)-aconitate, and even the non-physiological cis-homo(4)-aconitate with similar efficiency. These reactions are part of the biosynthesis pathway of coenzyme B. Can also catalyze the hydration of maleate to (R)-malate, and that of cis-aconitate. Cannot catalyze the hydration of citraconate and the dehydration of (S)-homocitrate, citramalate, 2-isopropylmalate, 3-isopropylmalate, citrate or threo-DL-isocitrate. The protein is Methanogen homoaconitase large subunit (hacA) of Methanocaldococcus jannaschii (strain ATCC 43067 / DSM 2661 / JAL-1 / JCM 10045 / NBRC 100440) (Methanococcus jannaschii).